The following is a 343-amino-acid chain: D-alanine--D-alanine ligase (343 aa).

The ATP-grasp domain occupies 132–337; it reads KNLFSYHKIP…YPDLIDKLIE (206 aa). 165–220 provides a ligand contact to ATP; sequence DRFLGWPCFVKPANMGSSIGVSKVHSPGEVKKALEKGFYYDRKLIFEEFVEGREIE. Positions 291, 304, and 306 each coordinate Mg(2+).

Belongs to the D-alanine--D-alanine ligase family. Mg(2+) is required as a cofactor. The cofactor is Mn(2+).

It is found in the cytoplasm. It catalyses the reaction 2 D-alanine + ATP = D-alanyl-D-alanine + ADP + phosphate + H(+). Its pathway is cell wall biogenesis; peptidoglycan biosynthesis. In terms of biological role, cell wall formation. This is D-alanine--D-alanine ligase from Halothermothrix orenii (strain H 168 / OCM 544 / DSM 9562).